The primary structure comprises 102 residues: Large ribosomal subunit protein uL24 (102 aa).

A disordered region spans residues 1-22; that stretch reads MHVKKGDTVQVMSGKDKGKQGV.

It belongs to the universal ribosomal protein uL24 family. Part of the 50S ribosomal subunit.

In terms of biological role, one of two assembly initiator proteins, it binds directly to the 5'-end of the 23S rRNA, where it nucleates assembly of the 50S subunit. Functionally, one of the proteins that surrounds the polypeptide exit tunnel on the outside of the subunit. The sequence is that of Large ribosomal subunit protein uL24 from Exiguobacterium sp. (strain ATCC BAA-1283 / AT1b).